Here is a 296-residue protein sequence, read N- to C-terminus: Partitioning protein REP2 (296 aa).

Met-1 bears the N-acetylmethionine mark. Residues 1-57 form an interaction with REP1 region; sequence MDDIETAKNLTVKARTAYSVWDVCRLFIEMIAPDVDIDIESKRKSDELLFPGYVIRP. Positions 58–296 are DNA-binding, and self-association; that stretch reads MESLTTGRPY…GRKSRNTSRV (239 aa). Residues 228 to 296 are disordered; the sequence is SELEGRTEVN…GRKSRNTSRV (69 aa). Basic residues predominate over residues 275–296; that stretch reads PTKKRRVATRVRGRKSRNTSRV. A nuclear localization region spans residues 276–296; it reads TKKRRVATRVRGRKSRNTSRV.

As to quaternary structure, interacts with REP1.

It localises to the nucleus. Its function is as follows. Part of the plasmid partitioning system, which ensures the equal distribution of replicated plasmid molecules to daughter cells. The plasmids exist as well-organized plasmid foci within the nucleus that stay together throughout the cell-cycle and act as entity during segregation, effetively reducing copy number to one. Plasmid partitioning requires the proteins REP1, REP2, and a cis-acting locus STB (REP3). REP1-REP2 stably associate with CSE4-containing chromatin at STB during S-phase, marking the locus with a centromeric tag, and thereby probably catching mitotic spindle microtubules to the plasmid cluster and coupling plasmid segregation to chromosome segregation. REP1-REP2 are required to recruit the cohesin complex to the STB locus for pairing of the replicated plasmid cluster, a prerequisite for successful plasmid segregation. REP1-REP2 also negatively regulate expression of site-specific recombinase FLP and of RAF1. This chain is Partitioning protein REP2 (REP2), found in Saccharomyces cerevisiae (strain ATCC 204508 / S288c) (Baker's yeast).